Here is a 325-residue protein sequence, read N- to C-terminus: MSWFTPELIEILISVLKAVVILLVVVTCGAFMSFGERRLLGLFQNRYGPNRVGWGGSLQLVADMIKMFFKEDWVPRFSDRAIFTLAPVIAFTSLLLSFAIVPVSPTWAVADLNIGILFFLMMAGLAVYAVLFAGWASNNKYSLLGAMRASAQTLSYEVFLGLSLMGVVAQAGSFNMQDIVNSQEHVWNVIPQFFGFLTFAIAGVAVCHRHPFDQPEAEQELADGYHIEYSGMKFGLFFVGEYIGIVTVSALIVTLFFGGWQGPFLPPFIWFALKTAFFMVMFILIRASLPRPRYDQVMSFGWKVCLPLTLLNLLATAAVILYNAQ.

Transmembrane regions (helical) follow at residues 11-31 (ILIS…CGAF), 81-101 (AIFT…FAIV), 114-134 (IGIL…LFAG), 154-174 (LSYE…AGSF), 186-206 (VWNV…GVAV), 237-257 (FFVG…TLFF), 265-285 (LPPF…FILI), and 304-324 (VCLP…LYNA).

It belongs to the complex I subunit 1 family. NDH-1 is composed of 13 different subunits. Subunits NuoA, H, J, K, L, M, N constitute the membrane sector of the complex.

It is found in the cell inner membrane. The enzyme catalyses a quinone + NADH + 5 H(+)(in) = a quinol + NAD(+) + 4 H(+)(out). Its function is as follows. NDH-1 shuttles electrons from NADH, via FMN and iron-sulfur (Fe-S) centers, to quinones in the respiratory chain. The immediate electron acceptor for the enzyme in this species is believed to be ubiquinone. Couples the redox reaction to proton translocation (for every two electrons transferred, four hydrogen ions are translocated across the cytoplasmic membrane), and thus conserves the redox energy in a proton gradient. This subunit may bind ubiquinone. This Yersinia pseudotuberculosis serotype O:1b (strain IP 31758) protein is NADH-quinone oxidoreductase subunit H.